The chain runs to 315 residues: ADP/ATP translocase 4 (315 aa).

The Mitochondrial intermembrane segment spans residues 1–19 (MHREPAKKKAEKRLFDASS). A Solcar 1 repeat occupies 18–110 (SSFGKDLLAG…FAFKDKYKQL (93 aa)). Residues 20–49 (FGKDLLAGGVAAAVSKTAVAPIERVKLLLQ) form a helical membrane-spanning segment. Residues 50 to 86 (VQASSKQISPEARYKGMVDCLVRIPREQGFFSFWRGN) lie on the Mitochondrial matrix side of the membrane. Residues 87–111 (LANVIRYFPTQALNFAFKDKYKQLF) form a helical membrane-spanning segment. The ADP site is built by arginine 92 and lysine 104. The Mitochondrial intermembrane portion of the chain corresponds to 112-121 (MSGVNKEKQF). A helical transmembrane segment spans residues 122–142 (WRWFLANLASGGAAGATSLCV). Solcar repeat units lie at residues 123–213 (RWFL…VKGL) and 220–307 (TPFL…IKEF). Over 143–190 (VYPLDFARTRLGVDIGKGPEERQFKGLGDCIMKIAKSDGIAGLYQGFG) the chain is Mitochondrial matrix. The chain crosses the membrane as a helical span at residues 191 to 211 (VSVQGIIVYRASYFGAYDTVK). Residues 212–222 (GLLPKPKKTPF) lie on the Mitochondrial intermembrane side of the membrane. Residues 223–243 (LVSFFIAQVVTTCSGILSYPF) form a helical membrane-spanning segment. At 244-283 (DTVRRRMMMQSGEAKRQYKGTLDCFVKIYQHEGISSFFRG) the chain is on the mitochondrial matrix side. Arginine 247 contacts ADP. Positions 247 to 252 (RRRMMM) are important for transport activity. The short motif at 247 to 252 (RRRMMM) is the Nucleotide carrier signature motif element. Residues 284 to 301 (AFSNVLRGTGGALVLVLY) form a helical membrane-spanning segment. The Mitochondrial intermembrane segment spans residues 302–315 (DKIKEFFHIDIGGR).

The protein belongs to the mitochondrial carrier (TC 2.A.29) family. Monomer. In terms of tissue distribution, expressed in brain, liver, sperm and testis. In testis, expressed at higher level in spermatocytes, while it is expressed at lower level in spermatogonial cells. Expressed in erythrocytes (at protein level).

It is found in the mitochondrion inner membrane. It localises to the membrane. Its subcellular location is the cell projection. The protein resides in the cilium. The protein localises to the flagellum membrane. The enzyme catalyses ADP(in) + ATP(out) = ADP(out) + ATP(in). The catalysed reaction is dATP(out) + ADP(in) = dATP(in) + ADP(out). It catalyses the reaction dADP(in) + ADP(out) = dADP(out) + ADP(in). It carries out the reaction H(+)(in) = H(+)(out). Its activity is regulated as follows. The matrix-open state (m-state) is inhibited by the membrane-permeable bongkrekic acid (BKA). The cytoplasmic-open state (c-state) is inhibited by the membrane-impermeable toxic inhibitor carboxyatractyloside (CATR). Proton transporter activity is inhibited by ADP:ATP antiporter activity. Functionally, ADP:ATP antiporter that mediates import of ADP into the mitochondrial matrix for ATP synthesis, and export of ATP out to fuel the cell. Cycles between the cytoplasmic-open state (c-state) and the matrix-open state (m-state): operates by the alternating access mechanism with a single substrate-binding site intermittently exposed to either the cytosolic (c-state) or matrix (m-state) side of the inner mitochondrial membrane. Specifically required during spermatogenesis, probably to mediate ADP:ATP exchange in spermatocytes. Large ATP supplies from mitochondria may be critical for normal progression of spermatogenesis during early stages of meiotic prophase I, including DNA double-strand break repair and chromosomal synapsis. In addition to its ADP:ATP antiporter activity, also involved in mitochondrial uncoupling and mitochondrial permeability transition pore (mPTP) activity. Plays a role in mitochondrial uncoupling by acting as a proton transporter: proton transport uncouples the proton flows via the electron transport chain and ATP synthase to reduce the efficiency of ATP production and cause mitochondrial thermogenesis. Proton transporter activity is inhibited by ADP:ATP antiporter activity, suggesting that SLC25A31/ANT4 acts as a master regulator of mitochondrial energy output by maintaining a delicate balance between ATP production (ADP:ATP antiporter activity) and thermogenesis (proton transporter activity). Proton transporter activity requires free fatty acids as cofactor, but does not transport it. Among nucleotides, may also exchange ADP for dATP and dADP. Also plays a key role in mPTP opening, a non-specific pore that enables free passage of the mitochondrial membranes to solutes of up to 1.5 kDa, and which contributes to cell death. It is however unclear if SLC25A31/ANT4 constitutes a pore-forming component of mPTP or regulates it. This is ADP/ATP translocase 4 from Homo sapiens (Human).